The chain runs to 130 residues: MAKRKGARKKIVKKNIARGVVYINATFNNTVVTVTDEMGNVIAWSSAGSLGFKGSKKSTPFAAQQAVEDAMAKAKEHGIKEVGIKVQGPGSGRDTAVKSVGAIEGIRVLFFKDITPLPHNGCRPPKRRRV.

It belongs to the universal ribosomal protein uS11 family. Part of the 30S ribosomal subunit. Interacts with proteins S7 and S18. Binds to IF-3.

Its function is as follows. Located on the platform of the 30S subunit, it bridges several disparate RNA helices of the 16S rRNA. Forms part of the Shine-Dalgarno cleft in the 70S ribosome. This is Small ribosomal subunit protein uS11 from Nitratiruptor sp. (strain SB155-2).